The chain runs to 291 residues: ATP synthase gamma chain (291 aa).

This sequence belongs to the ATPase gamma chain family. In terms of assembly, F-type ATPases have 2 components, CF(1) - the catalytic core - and CF(0) - the membrane proton channel. CF(1) has five subunits: alpha(3), beta(3), gamma(1), delta(1), epsilon(1). CF(0) has three main subunits: a, b and c.

Its subcellular location is the cell membrane. Functionally, produces ATP from ADP in the presence of a proton gradient across the membrane. The gamma chain is believed to be important in regulating ATPase activity and the flow of protons through the CF(0) complex. This is ATP synthase gamma chain from Streptococcus pyogenes serotype M3 (strain ATCC BAA-595 / MGAS315).